A 168-amino-acid chain; its full sequence is MARFLVALALFGVVAMTAASGDAPKEWSGKPWLGKFVAEVSDKSENWEAFVDALGLPDQYPRAQLKTIHSFYKQGEHYHHILSLPDKNINKDIEFTLGQEVEIKHGEHSLKIKYFEDGNKLVADVSIPAKGKSIHDVYDVQGDQLIKSYKVGDVVAKKWFKKVANPAA.

Residues 1 to 19 (MARFLVALALFGVVAMTAA) form the signal peptide. Positions 26 to 57 (EWSGKPWLGKFVAEVSDKSENWEAFVDALGLP) are SAHS-c1. The tract at residues 72-100 (YKQGEHYHHILSLPDKNINKDIEFTLGQE) is SAHS-c2. The interval 113 to 162 (KYFEDGNKLVADVSIPAKGKSIHDVYDVQGDQLIKSYKVGDVVAKKWFKK) is SAHS-c3.

The protein belongs to the Secretory-abundant heat soluble protein (SAHS) family.

Its subcellular location is the secreted. Functionally, secreted heat soluble protein acting as a molecular shield in water-deficient condition. Tardigrade-specific intrinsically disordered proteins (TDPs) are essential for desiccation tolerance by forming non-crystalline amorphous solids upon desiccation, and this vitrified state mirrors their protective capabilities. In Hypsibius exemplaris (Freshwater tardigrade), this protein is Secretory-abundant heat soluble protein 33020.